The primary structure comprises 98 residues: NADH-ubiquinone oxidoreductase chain 4L (98 aa).

3 consecutive transmembrane segments (helical) span residues 1-21, 29-49, and 61-81; these read MSMV…GLLV, SLLC…ITIL, and IILL…LVMV.

Belongs to the complex I subunit 4L family. In terms of assembly, core subunit of respiratory chain NADH dehydrogenase (Complex I) which is composed of 45 different subunits.

Its subcellular location is the mitochondrion inner membrane. The enzyme catalyses a ubiquinone + NADH + 5 H(+)(in) = a ubiquinol + NAD(+) + 4 H(+)(out). Its function is as follows. Core subunit of the mitochondrial membrane respiratory chain NADH dehydrogenase (Complex I) which catalyzes electron transfer from NADH through the respiratory chain, using ubiquinone as an electron acceptor. Part of the enzyme membrane arm which is embedded in the lipid bilayer and involved in proton translocation. This is NADH-ubiquinone oxidoreductase chain 4L (MT-ND4L) from Mephitis mephitis (Striped skunk).